Here is a 57-residue protein sequence, read N- to C-terminus: Protein translocase subunit SecE (57 aa).

The chain crosses the membrane as a helical span at residues 34 to 54; the sequence is AGILLIGAIGFLVFLIMGGIV.

The protein belongs to the SecE/SEC61-gamma family. As to quaternary structure, component of the Sec protein translocase complex. Heterotrimer consisting of SecY (alpha), SecG (beta) and SecE (gamma) subunits. The heterotrimers can form oligomers, although 1 heterotrimer is thought to be able to translocate proteins. Interacts with the ribosome. May interact with SecDF, and other proteins may be involved.

It localises to the cell membrane. In terms of biological role, essential subunit of the Sec protein translocation channel SecYEG. Clamps together the 2 halves of SecY. May contact the channel plug during translocation. In Halobacterium salinarum (strain ATCC 29341 / DSM 671 / R1), this protein is Protein translocase subunit SecE.